A 355-amino-acid chain; its full sequence is Galectin-9 (355 aa).

2 consecutive Galectin domains span residues 17–148 (FTGM…ISFQ) and 227–355 (FFTS…HVQT). A beta-D-galactoside-binding positions include N48, H61, R65, N75, 82–88 (WGTEERK), H267, R271, T281, and 287–293 (WGSEERS).

Its subcellular location is the cytoplasm. It is found in the nucleus. It localises to the secreted. In terms of biological role, binds galactosides. Has high affinity for the Forssman pentasaccharide. Ligand for HAVCR2/TIM3. Binding to HAVCR2 induces T-helper type 1 lymphocyte (Th1) death. Also stimulates bactericidal activity in infected macrophages by causing macrophage activation and IL1B secretion which restricts intracellular bacterial growth. Ligand for P4HB; the interaction retains P4HB at the cell surface of Th2 T helper cells, increasing disulfide reductase activity at the plasma membrane, altering the plasma membrane redox state and enhancing cell migration. Ligand for CD44; the interaction enhances binding of SMAD3 to the FOXP3 promoter, leading to up-regulation of FOXP3 expression and increased induced regulatory T (iTreg) cell stability and suppressive function. Promotes ability of mesenchymal stromal cells to suppress T-cell proliferation. Expands regulatory T-cells and induces cytotoxic T-cell apoptosis following virus infection. Activates ERK1/2 phosphorylation inducing cytokine (IL-6, IL-8, IL-12) and chemokine (CCL2) production in mast and dendritic cells. Inhibits degranulation and induces apoptosis of mast cells. Induces maturation and migration of dendritic cells. Inhibits natural killer (NK) cell function. Can transform NK cell phenotype from peripheral to decidual during pregnancy. Astrocyte derived galectin-9 enhances microglial TNF production. May play a role in thymocyte-epithelial interactions relevant to the biology of the thymus. May provide the molecular basis for urate flux across cell membranes, allowing urate that is formed during purine metabolism to efflux from cells and serving as an electrogenic transporter that plays an important role in renal and gastrointestinal urate excretion. Highly selective to the anion urate. In Bos taurus (Bovine), this protein is Galectin-9 (LGALS9).